The primary structure comprises 631 residues: Eukaryotic translation initiation factor 3 subunit L (631 aa).

A PCI domain is found at 335-526 (TFVSVLIFFI…AETTLLDGER (192 aa)). Residues 571 to 631 (KSAPLPVRKP…PKSRQARIAA (61 aa)) form a disordered region. Low complexity predominate over residues 580 to 612 (PASSSAPAPATTAAPISKSGESAAPAPAEAPAA).

This sequence belongs to the eIF-3 subunit L family. In terms of assembly, component of the eukaryotic translation initiation factor 3 (eIF-3) complex.

It is found in the cytoplasm. In terms of biological role, component of the eukaryotic translation initiation factor 3 (eIF-3) complex, which is involved in protein synthesis of a specialized repertoire of mRNAs and, together with other initiation factors, stimulates binding of mRNA and methionyl-tRNAi to the 40S ribosome. The eIF-3 complex specifically targets and initiates translation of a subset of mRNAs involved in cell proliferation. The chain is Eukaryotic translation initiation factor 3 subunit L from Cryptococcus neoformans var. neoformans serotype D (strain B-3501A) (Filobasidiella neoformans).